We begin with the raw amino-acid sequence, 267 residues long: tRNA pseudouridine synthase A (267 aa).

The active-site Nucleophile is the D54. Y114 contacts substrate.

This sequence belongs to the tRNA pseudouridine synthase TruA family. As to quaternary structure, homodimer.

It carries out the reaction uridine(38/39/40) in tRNA = pseudouridine(38/39/40) in tRNA. Formation of pseudouridine at positions 38, 39 and 40 in the anticodon stem and loop of transfer RNAs. The sequence is that of tRNA pseudouridine synthase A from Tropheryma whipplei (strain Twist) (Whipple's bacillus).